Here is a 101-residue protein sequence, read N- to C-terminus: Anti-lipopolysaccharide factor (101 aa).

Cysteine 31 and cysteine 52 form a disulfide bridge.

Binds tightly to LPS and thus specifically inhibits the LPS-mediated activation of the hemolymph coagulation. It has a strong antibacterial effect especially on the growth of Gram-negative bacteria. This chain is Anti-lipopolysaccharide factor, found in Limulus polyphemus (Atlantic horseshoe crab).